A 423-amino-acid polypeptide reads, in one-letter code: Histidine--tRNA ligase (423 aa).

This sequence belongs to the class-II aminoacyl-tRNA synthetase family. As to quaternary structure, homodimer.

The protein resides in the cytoplasm. The enzyme catalyses tRNA(His) + L-histidine + ATP = L-histidyl-tRNA(His) + AMP + diphosphate + H(+). In Moorella thermoacetica (strain ATCC 39073 / JCM 9320), this protein is Histidine--tRNA ligase.